A 378-amino-acid chain; its full sequence is TelA-like protein SAS1347 (378 aa).

It belongs to the TelA family.

The sequence is that of TelA-like protein SAS1347 from Staphylococcus aureus (strain MSSA476).